The following is a 139-amino-acid chain: Small ribosomal subunit protein uS12 (139 aa).

Asp-102 is subject to 3-methylthioaspartic acid.

It belongs to the universal ribosomal protein uS12 family. Part of the 30S ribosomal subunit. Contacts proteins S8 and S17. May interact with IF1 in the 30S initiation complex.

Functionally, with S4 and S5 plays an important role in translational accuracy. In terms of biological role, interacts with and stabilizes bases of the 16S rRNA that are involved in tRNA selection in the A site and with the mRNA backbone. Located at the interface of the 30S and 50S subunits, it traverses the body of the 30S subunit contacting proteins on the other side and probably holding the rRNA structure together. The combined cluster of proteins S8, S12 and S17 appears to hold together the shoulder and platform of the 30S subunit. This is Small ribosomal subunit protein uS12 from Bacillus pumilus (strain SAFR-032).